Consider the following 296-residue polypeptide: 4-hydroxy-tetrahydrodipicolinate synthase (296 aa).

Thr-44 provides a ligand contact to pyruvate. The Proton donor/acceptor role is filled by Tyr-132. The active-site Schiff-base intermediate with substrate is the Lys-162. Ile-204 provides a ligand contact to pyruvate.

The protein belongs to the DapA family. Homotetramer; dimer of dimers.

The protein resides in the cytoplasm. The enzyme catalyses L-aspartate 4-semialdehyde + pyruvate = (2S,4S)-4-hydroxy-2,3,4,5-tetrahydrodipicolinate + H2O + H(+). It participates in amino-acid biosynthesis; L-lysine biosynthesis via DAP pathway; (S)-tetrahydrodipicolinate from L-aspartate: step 3/4. Its function is as follows. Catalyzes the condensation of (S)-aspartate-beta-semialdehyde [(S)-ASA] and pyruvate to 4-hydroxy-tetrahydrodipicolinate (HTPA). This Novosphingobium aromaticivorans (strain ATCC 700278 / DSM 12444 / CCUG 56034 / CIP 105152 / NBRC 16084 / F199) protein is 4-hydroxy-tetrahydrodipicolinate synthase.